Here is a 384-residue protein sequence, read N- to C-terminus: Chorismate synthase (384 aa).

2 residues coordinate NADP(+): Arg39 and Arg45. Residues 130-132, 248-249, Gly292, 307-311, and Arg333 each bind FMN; these read RSS, NA, and KPIPT.

Belongs to the chorismate synthase family. As to quaternary structure, homotetramer. The cofactor is FMNH2.

The enzyme catalyses 5-O-(1-carboxyvinyl)-3-phosphoshikimate = chorismate + phosphate. It functions in the pathway metabolic intermediate biosynthesis; chorismate biosynthesis; chorismate from D-erythrose 4-phosphate and phosphoenolpyruvate: step 7/7. Its function is as follows. Catalyzes the anti-1,4-elimination of the C-3 phosphate and the C-6 proR hydrogen from 5-enolpyruvylshikimate-3-phosphate (EPSP) to yield chorismate, which is the branch point compound that serves as the starting substrate for the three terminal pathways of aromatic amino acid biosynthesis. This reaction introduces a second double bond into the aromatic ring system. The polypeptide is Chorismate synthase (Exiguobacterium sibiricum (strain DSM 17290 / CCUG 55495 / CIP 109462 / JCM 13490 / 255-15)).